The chain runs to 347 residues: Putative histone PARylation factor 1-like (347 aa).

An N-acetylmethionine modification is found at M1. N6-acetyllysine occurs at positions 187 and 234.

The protein belongs to the HPF1 family.

The polypeptide is Putative histone PARylation factor 1-like (Homo sapiens (Human)).